Here is a 476-residue protein sequence, read N- to C-terminus: Beta-xylosidase (476 aa).

The active-site Proton donor is E188. E292 acts as the Nucleophile in catalysis. N468 carries an N-linked (GlcNAc...) asparagine glycan.

It belongs to the glycosyl hydrolase 5 (cellulase A) family.

The protein localises to the secreted. It carries out the reaction Hydrolysis of (1-&gt;4)-beta-D-xylans, to remove successive D-xylose residues from the non-reducing termini.. Functionally, catalyzes the hydrolysis of xylo-oligomers to xylose units and plays an important role in xylan degradation. Can also perform the transglycosylation of xylose and alcohol. Has no endoglucanase activity. The protein is Beta-xylosidase of Phanerodontia chrysosporium (White-rot fungus).